The sequence spans 1285 residues: Protein crumbs homolog 2 (1285 aa).

The first 28 residues, 1 to 28 (MALARPGTPDPQALASVLLLLLWAPALS), serve as a signal peptide directing secretion. Residues 1 to 350 (MALARPGTPD…GFQCHCPDGY (350 aa)) form a required for maximum inhibition of APP amyloid-beta peptide secretion region. The EGF-like 1 domain occupies 67-106 (EPRGCATQPCHHGALCVPQGPDPTGFRCYCVPGFQGPRCE). Intrachain disulfides connect C71-C82, C76-C94, C96-C105, C112-C123, C117-C132, C134-C143, C150-C161, C155-C170, C172-C181, C188-C199, C193-C208, C210-C220, C227-C238, C232-C247, C249-C258, C265-C276, C270-C306, C308-C317, C324-C335, C329-C344, C346-C355, C362-C373, C367-C382, C384-C393, C400-C411, C405-C424, and C426-C435. The 37-residue stretch at 108–144 (DIDECASRPCHHGATCRNLADRYECHCPLGYAGVTCE) folds into the EGF-like 2; calcium-binding domain. The EGF-like 3; calcium-binding domain occupies 146–182 (EVDECASAPCLHGGSCLDGVGSFRCVCAPGYGGTRCQ). The 38-residue stretch at 184-221 (DLDECQSQPCAHGGTCHDLVNGFRCDCAGTGYEGTHCE) folds into the EGF-like 4; calcium-binding domain. EGF-like domains follow at residues 223 to 259 (EVLE…ELCE) and 261 to 318 (DEDE…ADCG). N-linked (GlcNAc...) asparagine glycosylation occurs at N235. S267 is a glycosylation site (O-linked (Glc...) serine). The EGF-like 7; calcium-binding domain occupies 320-356 (EVDECASRPCLNGGHCQDLPNGFQCHCPDGYAGPTCE). In terms of domain architecture, EGF-like 8; calcium-binding spans 358–394 (DVDECLSDPCLHGGTCSDTVAGYICRCPETWGGRDCS). The EGF-like 9 domain maps to 396–436 (QLTGCQGHTCPLAATCIPIFESGVHSYVCHCPPGTHGPFCG). Residues 431–603 (HGPFCGQNTT…DLGENVLLGC (173 aa)) enclose the Laminin G-like 1 domain. Residues N438 and N478 are each glycosylated (N-linked (GlcNAc...) asparagine). 4 disulfides stabilise this stretch: C579–C603, C609–C620, C614–C629, and C631–C640. The EGF-like 10 domain occupies 605–641 (RREQCRPLPCVHGGSCVDLWTHFRCDCARPHRGPTCA). A Laminin G-like 2 domain is found at 647–805 (ATFGLGGAPS…RQSWNLTAGC (159 aa)). 4 N-linked (GlcNAc...) asparagine glycosylation sites follow: N669, N690, N786, and N800. Cystine bridges form between C766–C805, C811–C822, C816–C831, and C833–C842. In terms of domain architecture, EGF-like 11 spans 807–843 (SEDMCSPDPCFNGGTCLVTWNDFHCTCPANFTGPTCA). N-linked (GlcNAc...) asparagine glycosylation is found at N836, N886, N926, and N1009. The 184-residue stretch at 871-1054 (EATFREGPPA…PGTPAPILGC (184 aa)) folds into the Laminin G-like 3 domain. 13 disulfide bridges follow: C1013–C1054, C1060–C1071, C1065–C1080, C1082–C1091, C1098–C1108, C1103–C1118, C1120–C1129, C1138–C1150, C1144–C1159, C1161–C1170, C1177–C1188, C1182–C1197, and C1199–C1208. 4 EGF-like domains span residues 1056 to 1092 (GAPV…PRCE), 1094 to 1130 (HVDP…PRCR), 1134 to 1171 (PSKE…QRCQ), and 1173 to 1209 (PTLP…QFCE). N-linked (GlcNAc...) asparagine glycosylation is found at N1141 and N1158. The chain crosses the membrane as a helical span at residues 1225–1245 (VAVPAACACLLLLLLGLLSGI). The segment at 1249-1285 (RKRRQSEGTYSPSQQEVAGARLEMDSVLKVPPEERLI) is interaction with EPB41L5.

The protein belongs to the Crumbs protein family. In terms of assembly, associates with the gamma-secretase complex via interaction (via the transmembrane domain) with PSEN1/PS1. Interacts (via intracellular domain) with EPB41L5. Interacts with PALS1. Post-translationally, O-glucosylated by POGLUT1 at Ser-267; consists of an O-glucose trisaccharide, in which the O-glucose is elongated by the addition of two xylose residues. O-glucosylation is required for localization at the plasma membrane. In terms of processing, N-glycosylated. Expressed in glomeruli, podocytes of the glomerular capillary loops, and parietal glomerular epithelial cells in the kidney (at protein level). Expressed in retina, fetal eye and brain. Also expressed in kidney, RPE/choroid, and at low levels in lung, placenta, and heart.

The protein localises to the apical cell membrane. Its subcellular location is the cytoplasm. It is found in the cell junction. The protein resides in the secreted. Apical polarity protein that plays a central role during the epithelial-to-mesenchymal transition (EMT) at gastrulation, when newly specified mesodermal cells move inside the embryo. Acts by promoting cell ingression, the process by which cells leave the epithelial epiblast and move inside the embryo to form a new tissue layer. The anisotropic distribution of CRB2 and MYH10/myosin-IIB at cell edges define which cells will ingress: cells with high apical CRB2 are probably extruded from the epiblast by neighboring cells with high levels of apical MYH10/myosin-IIB. Plays a role in the maintenance of retinal neuroepithelium organization, structural integrity, adhesion, photoreceptor polarity and retinal photoreceptor layer thickness. May play a role in determining the length of cone photoreceptor outer segments and proliferation of late-born progenitor cells. Also required for maintenance of the apical polarity complex during development of the cortex. Inhibits gamma-secretase-dependent cleavage of APP and secretion of amyloid-beta peptide 40 and amyloid-beta peptide 42, and thereby inhibits gamma-secretase-dependent Notch transcription. The protein is Protein crumbs homolog 2 of Homo sapiens (Human).